A 433-amino-acid polypeptide reads, in one-letter code: Transcription factor TCP18 (433 aa).

Disordered regions lie at residues 130–163 and 247–281; these read QRIS…GTRD and DDRG…RTPI. The region spanning 148-206 is the TCP domain; the sequence is RTDRHSKIKTAKGTRDRRMRLSLDVAKELFGLQDMLGFDKASKTVEWLLTQAKPEIIKI. The R domain maps to 287–304; the sequence is KEERAKARERAKGRTMEK.

As to expression, expressed in unelongated axillary buds, and, to a lower extent, in axillary structures such as flowers and siliques.

Its subcellular location is the nucleus. Transcription factor that prevents axillary bud outgrowth and delays early axillary bud development. Indirectly required for the auxin-induced control of apical dominance. This Arabidopsis thaliana (Mouse-ear cress) protein is Transcription factor TCP18.